We begin with the raw amino-acid sequence, 91 residues long: Heat shock protein 30E (91 aa).

The tract at residues 62–91 is disordered; the sequence is RDQIRQPGAPESEGTSPNTGKDGKDPGNSL. Basic and acidic residues predominate over residues 82-91; the sequence is KDGKDPGNSL.

Belongs to the small heat shock protein (HSP20) family.

This is Heat shock protein 30E (hsp30e) from Xenopus laevis (African clawed frog).